The following is a 548-amino-acid chain: Natural resistance-associated macrophage protein 1 (548 aa).

The disordered stretch occupies residues 1-38 (MPGDMGPPKQGGTRYGSISSPPSPGPQQAPPGGTYLSE). Residues 1-55 (MPGDMGPPKQGGTRYGSISSPPSPGPQQAPPGGTYLSEKIPIPDTESGAFSLRKL) are Cytoplasmic-facing. The chain crosses the membrane as a helical span at residues 56 to 73 (WAFTGPGFLMSIAFLDPG). The Extracellular portion of the chain corresponds to 74 to 82 (NIESDLQAG). The helical transmembrane segment at 83–102 (AVAGFKLLWVLLWATVLGLL) threads the bilayer. At 103-139 (CQRLAARLGVVTGKDLGEVCHLYYPKVPRILLWLTIE) the chain is on the cytoplasmic side. A helical membrane pass occupies residues 140–160 (LAIVGSDMQEVIGTAIAFSLL). Residues 161–164 (SAGR) lie on the Extracellular side of the membrane. Residues 165–184 (IPLWGGVLITIVDTFFFLFL) form a helical membrane-spanning segment. Over 185-193 (DNYGLRKLE) the chain is Cytoplasmic. A helical transmembrane segment spans residues 194–214 (AFFGFLITIMALTFGYEYVVA). At 215–237 (RPAQGALLQGLFLPSCAGCGQPE) the chain is on the extracellular side. The chain crosses the membrane as a helical span at residues 238 to 256 (LLQAVGIVGAIIMPHNIYL). Residues 257–284 (HSSLVKSREVDRSRRADIREANMYFLIE) lie on the Cytoplasmic side of the membrane. A helical transmembrane segment spans residues 285–304 (ATIALSVSFLINLFVMAVFG). Topologically, residues 305 to 346 (QAFYKQTNQAAFNICANSSLHDYATIFPRNNLTVAVDIYQGG) are extracellular. Residues Asn321 and Asn335 are each glycosylated (N-linked (GlcNAc...) asparagine). A helical transmembrane segment spans residues 347 to 366 (VILGCLFGPAALYIWAVGLL). The Cytoplasmic portion of the chain corresponds to 367–397 (AAGQSSTMTGTYAGQFVMEGFLKLRWSRFAR). Residues 398 to 415 (VLLTRSCAILPTVLVAVF) traverse the membrane as a helical segment. The Extracellular segment spans residues 416 to 426 (RDLRDLSGLND). The helical transmembrane segment at 427 to 447 (LLNVLQSLLLPFAVLPILTFT) threads the bilayer. Topologically, residues 448 to 463 (SMPAVMQEFANGLVSK) are cytoplasmic. The helical transmembrane segment at 464–485 (VISSSIMVLVCAVNLYFVISYV) threads the bilayer. Over 486–493 (PSLPHPDY) the chain is Extracellular. The helical transmembrane segment at 494–513 (FSLVALLAAAYLGLTTYLVW) threads the bilayer. At 514–548 (TCLITQGATLLAHSSHQRFLYGLPEEDQENGRTSG) the chain is on the cytoplasmic side.

It belongs to the NRAMP family.

It is found in the late endosome membrane. The protein resides in the lysosome membrane. The enzyme catalyses Zn(2+)(in) + H(+)(out) = Zn(2+)(out) + H(+)(in). The catalysed reaction is Fe(2+)(in) + H(+)(out) = Fe(2+)(out) + H(+)(in). It catalyses the reaction Mn(2+)(in) + H(+)(out) = Mn(2+)(out) + H(+)(in). Macrophage-specific antiporter that fluxes metal ions in either direction against a proton gradient. Localized to late endosomal lysosomal membranes, delivers bivalent cations from the cytosol into these acidic compartments where they may directly affect antimicrobial activity. Involved in iron metabolism and host natural resistance to infection with intracellular parasites. Pathogen resistance involves sequestration of Fe(2+) and Mn(2+), cofactors of both prokaryotic and eukaryotic catalases and superoxide dismutases, not only to protect the macrophage against its own generation of reactive oxygen species, but to deny the cations to the pathogen for synthesis of its protective enzymes. This Cervus elaphus (Red deer) protein is Natural resistance-associated macrophage protein 1 (SLC11A1).